Here is a 126-residue protein sequence, read N- to C-terminus: Nucleoside diphosphate kinase B (126 aa).

5 residues coordinate ATP: Lys-6, Phe-37, Thr-68, Arg-79, and Asn-89. The Pros-phosphohistidine intermediate role is filled by His-92.

This sequence belongs to the NDK family. Mg(2+) is required as a cofactor.

Its subcellular location is the cytoplasm. It is found in the nucleus. The protein localises to the cell projection. The protein resides in the lamellipodium. It localises to the ruffle. The catalysed reaction is a 2'-deoxyribonucleoside 5'-diphosphate + ATP = a 2'-deoxyribonucleoside 5'-triphosphate + ADP. It carries out the reaction a ribonucleoside 5'-diphosphate + ATP = a ribonucleoside 5'-triphosphate + ADP. Functionally, major role in the synthesis of nucleoside triphosphates other than ATP. The protein is Nucleoside diphosphate kinase B (nme2) of Macruronus magellanicus (Patagonian grenadier).